A 24-amino-acid polypeptide reads, in one-letter code: Heat shock 70 kDa protein 4L (24 aa).

At Thr19 the chain carries Phosphothreonine.

The protein belongs to the heat shock protein 70 family. In terms of assembly, homodimer. In the testis, forms a complex with p53 at 32.5 degrees Celsius which is scrotal temperature but not at 37 or 42 degrees Celsius. In terms of tissue distribution, expressed at high levels in testis and at much lower levels in brain. In testis, expressed mainly in germ cells. Widespread in brain with highest expression in cerebellum and medulla oblongata. Also expressed in renal medulla of water-restricted animals.

The protein localises to the cytoplasm. It is found in the nucleus. Functionally, possesses chaperone activity in vitro where it inhibits aggregation of citrate synthase. The sequence is that of Heat shock 70 kDa protein 4L (Hspa4l) from Rattus norvegicus (Rat).